A 475-amino-acid chain; its full sequence is ATP synthase subunit beta (475 aa).

161-168 (GGAGVGKT) serves as a coordination point for ATP.

Belongs to the ATPase alpha/beta chains family. F-type ATPases have 2 components, CF(1) - the catalytic core - and CF(0) - the membrane proton channel. CF(1) has five subunits: alpha(3), beta(3), gamma(1), delta(1), epsilon(1). CF(0) has three main subunits: a(1), b(2) and c(9-12). The alpha and beta chains form an alternating ring which encloses part of the gamma chain. CF(1) is attached to CF(0) by a central stalk formed by the gamma and epsilon chains, while a peripheral stalk is formed by the delta and b chains.

The protein localises to the cell membrane. It catalyses the reaction ATP + H2O + 4 H(+)(in) = ADP + phosphate + 5 H(+)(out). Produces ATP from ADP in the presence of a proton gradient across the membrane. The catalytic sites are hosted primarily by the beta subunits. In Mycoplasma mycoides subsp. mycoides SC (strain CCUG 32753 / NCTC 10114 / PG1), this protein is ATP synthase subunit beta.